Here is a 29-residue protein sequence, read N- to C-terminus: Cycloviolacin-O22 (29 aa).

The segment at residues 1–29 (GLPICGETCVGGTCNTPGCTCSWPVCTRN) is a cross-link (cyclopeptide (Gly-Asn)). 3 disulfide bridges follow: Cys5–Cys19, Cys9–Cys21, and Cys14–Cys26.

This is a cyclic peptide. In terms of tissue distribution, expressed in roots and runners but not in leaves, petals and petioles (at protein level).

Functionally, probably participates in a plant defense mechanism. This Viola odorata (Sweet violet) protein is Cycloviolacin-O22.